The following is a 606-amino-acid chain: Retrovirus-related Pol polyprotein from type-1 retrotransposable element R2 (606 aa).

Residues 1–208 (GTLANIIMLE…NTFKYLGLTF (208 aa)) form the Reverse transcriptase domain. Residues 331-606 (IFNIEGPARS…PPDPPRPVPP (276 aa)) form a nucleic acid-binding endonuclease region.

The catalysed reaction is DNA(n) + a 2'-deoxyribonucleoside 5'-triphosphate = DNA(n+1) + diphosphate. This is Retrovirus-related Pol polyprotein from type-1 retrotransposable element R2 from Popillia japonica (Japanese beetle).